The sequence spans 384 residues: Galactokinase (384 aa).

Residue 34-37 (EHTD) participates in substrate binding. 123-129 (SSGLSSS) serves as a coordination point for ATP. Positions 129 and 161 each coordinate Mg(2+). Asp-173 serves as the catalytic Proton acceptor. Tyr-222 contributes to the substrate binding site.

The protein belongs to the GHMP kinase family. GalK subfamily.

The protein resides in the cytoplasm. The enzyme catalyses alpha-D-galactose + ATP = alpha-D-galactose 1-phosphate + ADP + H(+). The protein operates within carbohydrate metabolism; galactose metabolism. Catalyzes the transfer of the gamma-phosphate of ATP to D-galactose to form alpha-D-galactose-1-phosphate (Gal-1-P). The sequence is that of Galactokinase from Haemophilus influenzae (strain PittEE).